The primary structure comprises 143 residues: Transcriptional regulator MraZ (143 aa).

2 consecutive SpoVT-AbrB domains span residues 5–47 and 76–119; these read SHAP…PMAE and AADD…DAQR.

The protein belongs to the MraZ family. As to quaternary structure, forms oligomers.

The protein resides in the cytoplasm. It localises to the nucleoid. The chain is Transcriptional regulator MraZ from Frankia casuarinae (strain DSM 45818 / CECT 9043 / HFP020203 / CcI3).